Consider the following 439-residue polypeptide: MLSKLARLQTVAGLGLGVHSSVASATSVATKKTVQGPPSSDYIFERESKYGAHNYHPLPVALERGKGIYVWDVEGRKYFDFLSAYSAVNQGHCHPKIVDALKSQVDKLTLTSRAFYNNVLGEYEEYVTKLFNYHKVLPMNTGVEAGETACKLARKWGYTVKGIPKYKAKIVFAAGNFWGRTLSAISSSTDPTSYDGFGPFMPGFEIIPYNDLPALERALQDPNVAAFMVEPIQGEAGVVVPDPGYLVGVRELCTQHQVLFIADEIQTGLARTGRWLAIDHENVRPDIVLLGKALSGGLYPVSAVLCDDEIMLTIKPGEHGSTYGGNPLGCRVAIAALEVLEEENLAENAEKMGIILRNELMKLPSDVVTTVRGKGLLNAIVIRETKDCDAWKVCLRLRDNGLLAKPTHGDIIRFAPPLVIKEDEILEAVEIINKTILSF.

A mitochondrion-targeting transit peptide spans 1–25 (MLSKLARLQTVAGLGLGVHSSVASA). N6-acetyllysine occurs at positions 49 and 66. Position 102 is an N6-succinyllysine (lysine 102). Lysine 107 carries the N6-acetyllysine; alternate modification. At lysine 107 the chain carries N6-succinyllysine; alternate. The residue at position 292 (lysine 292) is an N6-(pyridoxal phosphate)lysine. Lysine 362 is modified (N6-acetyllysine; alternate). N6-succinyllysine; alternate is present on lysine 362. Residues lysine 386 and lysine 392 each carry the N6-acetyllysine modification. Residue lysine 405 is modified to N6-acetyllysine; alternate. N6-succinyllysine; alternate is present on lysine 405. Lysine 421 is modified (N6-acetyllysine).

The protein belongs to the class-III pyridoxal-phosphate-dependent aminotransferase family. As to quaternary structure, homohexamer. It depends on pyridoxal 5'-phosphate as a cofactor.

The protein resides in the mitochondrion matrix. The catalysed reaction is L-ornithine + 2-oxoglutarate = L-glutamate 5-semialdehyde + L-glutamate. The protein operates within amino-acid biosynthesis; L-proline biosynthesis; L-glutamate 5-semialdehyde from L-ornithine: step 1/1. Catalyzes the reversible interconversion of L-ornithine and 2-oxoglutarate to L-glutamate semialdehyde and L-glutamate. The polypeptide is Ornithine aminotransferase, mitochondrial (OAT) (Bos taurus (Bovine)).